The following is a 444-amino-acid chain: 3-phosphoshikimate 1-carboxyvinyltransferase (444 aa).

Residues lysine 29, serine 30, and arginine 34 each contribute to the 3-phosphoshikimate site. Position 29 (lysine 29) interacts with phosphoenolpyruvate. The phosphoenolpyruvate site is built by glycine 102 and arginine 131. 3-phosphoshikimate-binding residues include serine 176, glutamine 178, aspartate 326, and lysine 353. Glutamine 178 contacts phosphoenolpyruvate. Residue aspartate 326 is the Proton acceptor of the active site. Residues arginine 357 and arginine 399 each contribute to the phosphoenolpyruvate site.

This sequence belongs to the EPSP synthase family. Monomer.

Its subcellular location is the cytoplasm. The catalysed reaction is 3-phosphoshikimate + phosphoenolpyruvate = 5-O-(1-carboxyvinyl)-3-phosphoshikimate + phosphate. It functions in the pathway metabolic intermediate biosynthesis; chorismate biosynthesis; chorismate from D-erythrose 4-phosphate and phosphoenolpyruvate: step 6/7. Its function is as follows. Catalyzes the transfer of the enolpyruvyl moiety of phosphoenolpyruvate (PEP) to the 5-hydroxyl of shikimate-3-phosphate (S3P) to produce enolpyruvyl shikimate-3-phosphate and inorganic phosphate. The sequence is that of 3-phosphoshikimate 1-carboxyvinyltransferase from Synechococcus sp. (strain JA-3-3Ab) (Cyanobacteria bacterium Yellowstone A-Prime).